We begin with the raw amino-acid sequence, 171 residues long: Dual specificity protein phosphatase OPG106 (171 aa).

The Tyrosine-protein phosphatase domain maps to 23–171 (SPTIMTRVTN…IIEKYVIDKN (149 aa)). Cysteine 110 acts as the Phosphocysteine intermediate in catalysis.

The protein belongs to the protein-tyrosine phosphatase family. Non-receptor class dual specificity subfamily. In terms of assembly, homodimer.

It is found in the virion. The protein localises to the host cytoplasm. It catalyses the reaction O-phospho-L-tyrosyl-[protein] + H2O = L-tyrosyl-[protein] + phosphate. The catalysed reaction is O-phospho-L-seryl-[protein] + H2O = L-seryl-[protein] + phosphate. Inhibited by NSC-62914, NSC-28086, NSC-105687, NSC-23173, 540211 and 217691 with IC50 values of 48, 51, 212, 342, 4 and 11 uM, respectively. Serine/tyrosine phosphatase which down-regulates cellular antiviral response by dephosphorylating activated host STAT1 and blocking interferon (IFN)-stimulated innate immune responses. Dephosphorylates the OPG144 protein. In Homo sapiens (Human), this protein is Dual specificity protein phosphatase OPG106 (OPG106).